A 641-amino-acid polypeptide reads, in one-letter code: DEAD-box ATP-dependent RNA helicase 50 (641 aa).

Disordered stretches follow at residues 86–115 (SMPS…IGNF), 129–189 (RSAH…LNSV), and 197–216 (DDLD…WGNI). Acidic residues predominate over residues 150–159 (PSDESDEDGT). The short motif at 240–268 (RSFKEIGCSDEILGALRSFGFPRPSHIQA) is the Q motif element. One can recognise a Helicase ATP-binding domain in the interval 271 to 452 (YRPVLEGKSC…VETFPDCELI (182 aa)). 284 to 291 (DQSGSGKT) provides a ligand contact to ATP. A DEAD box motif is present at residues 399–402 (DEVD). Residues 487 to 641 (NKKSALVKII…GHPLHDVPCV (155 aa)) enclose the Helicase C-terminal domain.

Belongs to the DEAD box helicase family.

It catalyses the reaction ATP + H2O = ADP + phosphate + H(+). Probably involved in resistance to biotic and abiotic stresses. Confers tolerance to oxidative stress and mediates pathogenesis-related (PR) genes expression. Exhibits RNA-dependent ATPase and ATP-dependent RNA helicase activities in vitro. The chain is DEAD-box ATP-dependent RNA helicase 50 from Oryza sativa subsp. japonica (Rice).